The sequence spans 735 residues: Rho GTPase-activating protein SYDE1 (735 aa).

Disordered regions lie at residues 1 to 253, 601 to 655, and 669 to 706; these read MAEP…PYEV, PDTR…AGDW, and FLSG…FDAP. Over residues 14 to 47 the composition is skewed to basic and acidic residues; it reads RGREKLPRKKSDAKDRGRPAQRSEPKPPEPEPRV. The segment covering 151–160 has biased composition (low complexity); that stretch reads PTKTSRTKSP. Residues Ser-224, Ser-231, Ser-235, and Ser-244 each carry the phosphoserine modification. The C2 domain occupies 249-366; the sequence is RPYEVGPSAR…FRGCQAQQLA (118 aa). The region spanning 398–604 is the Rho-GAP domain; that stretch reads LPLQLLVERE…YLLQSWPDTR (207 aa). Over residues 669–679 the composition is skewed to basic and acidic residues; it reads FLSGPDYDHVT. Phosphoserine occurs at positions 681 and 683.

Post-translationally, palmitoylated. Probably palmitoylated by ZDHHC3 and ZDHHC7.

In terms of biological role, GTPase activator for the Rho-type GTPases. As a GCM1 downstream effector, it is involved in placental development and positively regulates trophoblast cells migration. It regulates cytoskeletal remodeling by controlling the activity of Rho GTPases including RHOA, CDC42 and RAC1. The sequence is that of Rho GTPase-activating protein SYDE1 (Syde1) from Rattus norvegicus (Rat).